The primary structure comprises 700 residues: mRNA cap guanine-N(7) methyltransferase (700 aa).

Basic and acidic residues-rich tracts occupy residues 1–10 and 52–67; these read MVYDPIRDCD and EPPRAASVHEDAESHR. 2 disordered regions span residues 1 to 263 and 277 to 392; these read MVYD…SVLR and AHAN…ERNK. Positions 113-128 are enriched in polar residues; it reads RSPSMSLSPRSQNQSL. Composition is skewed to low complexity over residues 129–144 and 220–241; these read PYPSSRPGSAAGSAHP and PQPTTTPSSPSTSQHTPYTPHH. Positions 429–700 constitute an mRNA cap 0 methyltransferase domain; that stretch reads SPIIGLKKFN…LYMGFAFEKM (272 aa). 438–439 contacts mRNA; that stretch reads NN. Positions 442, 461, 483, 512, 538, and 543 each coordinate S-adenosyl-L-methionine.

This sequence belongs to the class I-like SAM-binding methyltransferase superfamily. mRNA cap 0 methyltransferase family.

It localises to the nucleus. It carries out the reaction a 5'-end (5'-triphosphoguanosine)-ribonucleoside in mRNA + S-adenosyl-L-methionine = a 5'-end (N(7)-methyl 5'-triphosphoguanosine)-ribonucleoside in mRNA + S-adenosyl-L-homocysteine. Responsible for methylating the 5'-cap structure of mRNAs. The sequence is that of mRNA cap guanine-N(7) methyltransferase (ABD1) from Cryptococcus neoformans var. neoformans serotype D (strain B-3501A) (Filobasidiella neoformans).